A 30-amino-acid chain; its full sequence is Cycloviolin-D (30 aa).

A cross-link (cyclopeptide (Gly-Asn)) is located at residues 1 to 30 (GFPCGESCVFIPCISAAIGCSCKNKVCYRN). Disulfide bonds link Cys-4-Cys-20, Cys-8-Cys-22, and Cys-13-Cys-27.

This is a cyclic peptide.

In terms of biological role, probably participates in a plant defense mechanism. Has anti-HIV activity. The protein is Cycloviolin-D of Leonia cymosa (Sacha uba).